Here is a 145-residue protein sequence, read N- to C-terminus: Large ribosomal subunit protein uL13 (145 aa).

Belongs to the universal ribosomal protein uL13 family. As to quaternary structure, part of the 50S ribosomal subunit.

Its function is as follows. This protein is one of the early assembly proteins of the 50S ribosomal subunit, although it is not seen to bind rRNA by itself. It is important during the early stages of 50S assembly. The polypeptide is Large ribosomal subunit protein uL13 (Staphylococcus haemolyticus (strain JCSC1435)).